The sequence spans 165 residues: Transcriptional repressor NrdR (165 aa).

Residues 3–34 fold into a zinc finger; the sequence is CPYCGQLNNRVVDSRLSRSEFAVRRRRECLDC. In terms of domain architecture, ATP-cone spans 49 to 139; sequence VMVVKKDGRR…VYREFKDVDD (91 aa).

It belongs to the NrdR family. Requires Zn(2+) as cofactor.

Its function is as follows. Negatively regulates transcription of bacterial ribonucleotide reductase nrd genes and operons by binding to NrdR-boxes. The chain is Transcriptional repressor NrdR from Desulforapulum autotrophicum (strain ATCC 43914 / DSM 3382 / VKM B-1955 / HRM2) (Desulfobacterium autotrophicum).